The following is a 174-amino-acid chain: D(1B) dopamine receptor (174 aa).

The chain crosses the membrane as a helical span at residues 1 to 10; that stretch reads SILNLCIISV. The Cytoplasmic portion of the chain corresponds to 11 to 32; it reads DRYWAISRPFCYERKMTQRVAL. Residues 33-54 form a helical membrane-spanning segment; that stretch reads VMVGLAWTLSILISFIPVQLHW. Topologically, residues 55-96 are extracellular; it reads HRDKVGSRDGLDPPSNLANGTPWEEAGESDRSAENCDSSLNR. The disordered stretch occupies residues 64–88; it reads GLDPPSNLANGTPWEEAGESDRSAE. The N-linked (GlcNAc...) asparagine glycan is linked to N95. The helical transmembrane segment at 97–119 threads the bilayer; the sequence is TYAISSSLISFYIPVAIMIVTYT. The Cytoplasmic segment spans residues 120–169; sequence RIYRIAQVQIRRISSLERAAEHAQSCRSREACAPDSGLRASIKKETKVLK. A helical membrane pass occupies residues 170 to 174; the sequence is TLSVI.

The protein belongs to the G-protein coupled receptor 1 family.

It localises to the cell membrane. Functionally, dopamine receptor whose activity is mediated by G proteins which activate adenylyl cyclase. The sequence is that of D(1B) dopamine receptor (DRD5) from Bos taurus (Bovine).